Consider the following 355-residue polypeptide: Uroporphyrinogen decarboxylase (355 aa).

Residues 27-31, Asp-77, Tyr-154, Thr-209, and His-327 each bind substrate; that span reads RQAGR.

It belongs to the uroporphyrinogen decarboxylase family. Homodimer.

The protein resides in the cytoplasm. The catalysed reaction is uroporphyrinogen III + 4 H(+) = coproporphyrinogen III + 4 CO2. Its pathway is porphyrin-containing compound metabolism; protoporphyrin-IX biosynthesis; coproporphyrinogen-III from 5-aminolevulinate: step 4/4. Its function is as follows. Catalyzes the decarboxylation of four acetate groups of uroporphyrinogen-III to yield coproporphyrinogen-III. In Yersinia pestis bv. Antiqua (strain Antiqua), this protein is Uroporphyrinogen decarboxylase.